Consider the following 255-residue polypeptide: Uridylate kinase (255 aa).

The segment at 1 to 21 (MSAAAAGRGERLNHAGNPGHR) is disordered. 30-33 (KLGG) contacts ATP. G71 contributes to the UMP binding site. Residues G72 and R76 each contribute to the ATP site. UMP contacts are provided by residues D91 and 152-159 (MGLPYFST). ATP contacts are provided by F185 and D188.

Belongs to the UMP kinase family. Homohexamer.

The protein localises to the cytoplasm. The enzyme catalyses UMP + ATP = UDP + ADP. It functions in the pathway pyrimidine metabolism; CTP biosynthesis via de novo pathway; UDP from UMP (UMPK route): step 1/1. With respect to regulation, inhibited by UTP. Functionally, catalyzes the reversible phosphorylation of UMP to UDP. The sequence is that of Uridylate kinase from Mycobacterium leprae (strain TN).